We begin with the raw amino-acid sequence, 367 residues long: DNA replication and repair protein RecF (367 aa).

30–37 (GANGSGKT) is a binding site for ATP.

The protein belongs to the RecF family.

The protein localises to the cytoplasm. Its function is as follows. The RecF protein is involved in DNA metabolism; it is required for DNA replication and normal SOS inducibility. RecF binds preferentially to single-stranded, linear DNA. It also seems to bind ATP. The protein is DNA replication and repair protein RecF of Pseudomonas savastanoi pv. phaseolicola (strain 1448A / Race 6) (Pseudomonas syringae pv. phaseolicola (strain 1448A / Race 6)).